The following is a 138-amino-acid chain: MRIMGLDVGSKTVGVAISDPLGWTAQGVETIQIDENRKQFGYDRVKELVLEYEVEKVVVGLPKNMNNTIGPRAESSKIYAEVLESRIGLPVVLWDERLTTSAAERTLIEADVSRKKRKEVIDKLAAVMILQSYLDTTN.

The protein belongs to the YqgF nuclease family.

It localises to the cytoplasm. Could be a nuclease involved in processing of the 5'-end of pre-16S rRNA. The polypeptide is Putative pre-16S rRNA nuclease (Listeria monocytogenes serotype 4b (strain CLIP80459)).